A 170-amino-acid chain; its full sequence is uncharacterized protein (170 aa).

Residues 1-15 are Cytoplasmic-facing; the sequence is MFLTSPFESCIVLSS. Residues 16–36 traverse the membrane as a helical segment; the sequence is LIAGLLFSLSTGFVGILGVFA. Topologically, residues 37-76 are extracellular; sequence SLFETELSVSPKRLSLSSLSWPKTFWALLSSVEGVSWESS. The chain crosses the membrane as a helical span at residues 77–97; sequence LFACIVGCCFAVTVIASLSAS. The Cytoplasmic portion of the chain corresponds to 98 to 119; the sequence is RVFGTVASSFRDSSCCCDSSPA. A helical transmembrane segment spans residues 120–140; it reads VSVLATPATAALALLSLLLSL. The Extracellular segment spans residues 141-170; it reads PCWSTSTEAFTVDPSPSVFSMLANRITIGL.

It is found in the membrane. This is an uncharacterized protein from Saccharomyces cerevisiae (strain ATCC 204508 / S288c) (Baker's yeast).